Consider the following 315-residue polypeptide: Ankyrin repeat domain-containing protein 54 (315 aa).

The tract at residues 1–49 is disordered; the sequence is MDGSSPLLAAAGSDGDRSSSEGEYTLAGGPSAGDTEKREGESPMEAAGA. ANK repeat units lie at residues 124 to 153, 157 to 186, 190 to 219, and 223 to 255; these read HAVK…DPCA, KGRT…DPNQ, LGNT…RVDA, and AGRT…EVTQ.

It localises to the nucleus. The protein localises to the cytoplasm. The protein resides in the midbody. In terms of biological role, plays an important role in regulating intracellular signaling events associated with erythroid terminal differentiation. This is Ankyrin repeat domain-containing protein 54 (ankrd54) from Danio rerio (Zebrafish).